The following is a 137-amino-acid chain: Proofreading thioesterase EntH (137 aa).

Glutamate 63 (nucleophile or proton acceptor) is an active-site residue.

It belongs to the thioesterase PaaI family. As to quaternary structure, homotetramer. Dimer of dimers. Interacts specifically with the aryl carrier protein (ArCP) domain of EntB.

The protein resides in the cytoplasm. Its pathway is siderophore biosynthesis; enterobactin biosynthesis. Functionally, required for optimal enterobactin synthesis. Acts as a proofreading enzyme that prevents EntB misacylation by hydrolyzing the thioester bound existing between EntB and wrongly charged molecules. This is Proofreading thioesterase EntH from Shigella sonnei (strain Ss046).